A 712-amino-acid chain; its full sequence is Polyribonucleotide nucleotidyltransferase (712 aa).

Residues Asp-487 and Asp-493 each coordinate Mg(2+). In terms of domain architecture, KH spans 554-613; it reads PKIITMTINPDKIRDVIGPSGKQINKIIEETGVKIDIEQDGTVFISSINQEMNDKAKKII. Residues 623–691 form the S1 motif domain; the sequence is GEIYEAKVKR…KQGRVNLSRK (69 aa).

This sequence belongs to the polyribonucleotide nucleotidyltransferase family. The cofactor is Mg(2+).

The protein localises to the cytoplasm. The enzyme catalyses RNA(n+1) + phosphate = RNA(n) + a ribonucleoside 5'-diphosphate. In terms of biological role, involved in mRNA degradation. Catalyzes the phosphorolysis of single-stranded polyribonucleotides processively in the 3'- to 5'-direction. The sequence is that of Polyribonucleotide nucleotidyltransferase from Bacillus cereus (strain ATCC 14579 / DSM 31 / CCUG 7414 / JCM 2152 / NBRC 15305 / NCIMB 9373 / NCTC 2599 / NRRL B-3711).